A 404-amino-acid polypeptide reads, in one-letter code: Lysophospholipid transporter LplT (404 aa).

Helical transmembrane passes span 16-36, 53-73, 91-111, 139-159, 164-184, 195-213, 227-247, 253-273, 285-305, 310-330, 350-370, and 372-392; these read MIAVLCAQFFSAFGDNALLFA, ILQMAFVATYIVLAPFVGQFA, AGALVICFGFNPFLGYSLVGV, MMEASTIAAILLGSVAGGVLA, GVALGVCALVYAIAVVANMFI, SWRPRAMTGSFFTACLVLW, LFWGAGVTLRFLLVLWVPIAL, ATPTLLNAMVAIGIVVGAGAA, CLPAGVLIGVAVAIFALQHSM, LLLIIIGILGGFFVVPLNALL, GENTAMLLMLGLFSVVVKLGV, and VIAVGVGFGVIFALAIALLWG.

It belongs to the major facilitator superfamily. LplT (TC 2.A.1.42) family.

The protein localises to the cell inner membrane. In terms of biological role, catalyzes the facilitated diffusion of 2-acyl-glycero-3-phosphoethanolamine (2-acyl-GPE) into the cell. This chain is Lysophospholipid transporter LplT, found in Yersinia enterocolitica serotype O:8 / biotype 1B (strain NCTC 13174 / 8081).